Reading from the N-terminus, the 651-residue chain is MPKIHQLSATLSNQIAAGEVIERPASVVKELVENSIDAQATQIDVLISAAGLQEIRVSDNGIGIAPDDVATAFLRHATSKILTTRDLFNVHSLGFRGEALASIAAVADVKLTTAMDSGIGTQIHVKGGEVEAQSTAAHRRGTDVEVNDLFFNTPARLKYMKSQQTELGKIVDIVSRLAMANPDIAFTVSHDGNMVVRTAGQGDLRQTLAGIYGLSVARSMVDFKAQDLDFRVSGLTSLPETTRASRNYLSLVVNGRYIKNFQLTKAVIAGYGSKLMVGRYPMGVINIEMDAALVDVNVHPTKAEVRLSKEDQLSHLLSEAIRTRLAKENLIPDALDNLPKRERYDLDQLELTLNKISPKTMPSVQPQQGQQLRENTTTNLADTAAEEPTPAPTSPDLEIGDLDDQPIFNEPQRLAAWDQRYQRLASNVVPTLMADEPEPDISHVESAERFPNLTYLAQVHGTYLLAESGDGLYILDQHAAQERVNYEYYRQAIGEVSNDQQHLLVPIVLDYSAADAISIRDHRDVLESVGLYLEDFGQNSFVVEHHPTWFKAGQEEDTIKEMVDWVLRDGRMTVAAFREKTAIMMSCKRAIKANHHLDDRQARALLQKLPECENPFNCPHGRPVLVHFSNTDLEKMFKRIQDSHESGEMQA.

A disordered region spans residues 383–405 (TAAEEPTPAPTSPDLEIGDLDDQ).

This sequence belongs to the DNA mismatch repair MutL/HexB family.

In terms of biological role, this protein is involved in the repair of mismatches in DNA. It is required for dam-dependent methyl-directed DNA mismatch repair. May act as a 'molecular matchmaker', a protein that promotes the formation of a stable complex between two or more DNA-binding proteins in an ATP-dependent manner without itself being part of a final effector complex. The polypeptide is DNA mismatch repair protein MutL (Lacticaseibacillus casei (strain BL23) (Lactobacillus casei)).